We begin with the raw amino-acid sequence, 1114 residues long: Constitutive coactivator of PPAR-gamma-like protein 1 (1114 aa).

An interaction with YES1, SRC and FYN region spans residues 339-402 (PPHYLARPNP…YNLAEPALTL (64 aa)). Disordered regions lie at residues 372–396 (QAKP…YNLA) and 411–519 (EQNY…GNQI). Residues 431 to 443 (SPINPAPSGSPNH) are compositionally biased toward polar residues. A compositionally biased stretch (basic and acidic residues) spans 477–498 (GWEKTGSHSEPQARGDPGDQTK). Residues 499–510 (AEGSSTASSGSQ) show a composition bias toward polar residues. The residue at position 651 (Thr651) is a Phosphothreonine. The RNA binding stretch occupies residues 825–1114 (AEQAAKVEKM…LEAAVLKKEE (290 aa)). Omega-N-methylarginine is present on residues Arg869, Arg880, and Arg882. The tract at residues 918–940 (FSGSDSSRTSKSQGGIQPIPSQG) is disordered. An N6-acetyllysine modification is found at Lys928. Over residues 929–940 (SQGGIQPIPSQG) the composition is skewed to low complexity. Ser956 bears the Phosphoserine mark. An omega-N-methylarginine mark is found at Arg978 and Arg982. The segment at 1009–1099 (AIQGKPPYAA…LNALSTDSGC (91 aa)) is disordered. Ser1019 bears the Phosphoserine mark. Over residues 1022 to 1033 (EVAKELKSRSGE) the composition is skewed to basic and acidic residues. Positions 1034–1043 (SKSSAMSSDG) are enriched in polar residues. Residues Ser1040, Ser1041, and Ser1044 each carry the phosphoserine modification. Positions 1060–1097 (MNGSAGDTRAPSHSESALNNDSKTCNTNPHLNALSTDS) are enriched in polar residues.

It belongs to the constitutive coactivator of PPAR-gamma family. In terms of assembly, interacts with PURA. Interacts with YES1, SRC, FYN. Upon tyrosine phosphorylation, interacts with PIK3R1. Arg-978 is dimethylated, probably to asymmetric dimethylarginine. In terms of processing, phosphorylated on tyrosine by src family kinases upon ultraviolet exposure.

The protein localises to the cytoplasm. Its subcellular location is the cell membrane. Functionally, component of the oxidative stress-induced survival signaling. May regulate the activation of SRC family protein kinases. May act as a scaffolding protein enabling SRC family protein kinases to phosphorylate and activate PI3-kinase. Binds IGF2 RNA and promotes the production of IGF2 protein. This is Constitutive coactivator of PPAR-gamma-like protein 1 (FAM120A) from Bos taurus (Bovine).